Here is a 140-residue protein sequence, read N- to C-terminus: Nucleoside diphosphate kinase (140 aa).

Residues K11, F59, R87, T93, R104, and N114 each coordinate ATP. The Pros-phosphohistidine intermediate role is filled by H117.

This sequence belongs to the NDK family. In terms of assembly, homotetramer. The cofactor is Mg(2+).

The protein localises to the cytoplasm. It catalyses the reaction a 2'-deoxyribonucleoside 5'-diphosphate + ATP = a 2'-deoxyribonucleoside 5'-triphosphate + ADP. The catalysed reaction is a ribonucleoside 5'-diphosphate + ATP = a ribonucleoside 5'-triphosphate + ADP. Functionally, major role in the synthesis of nucleoside triphosphates other than ATP. The ATP gamma phosphate is transferred to the NDP beta phosphate via a ping-pong mechanism, using a phosphorylated active-site intermediate. This is Nucleoside diphosphate kinase from Hyphomonas neptunium (strain ATCC 15444).